Consider the following 127-residue polypeptide: Large ribosomal subunit protein bL17 (127 aa).

This sequence belongs to the bacterial ribosomal protein bL17 family. Part of the 50S ribosomal subunit. Contacts protein L32.

The polypeptide is Large ribosomal subunit protein bL17 (Salmonella paratyphi A (strain AKU_12601)).